The following is a 277-amino-acid chain: Putative pyruvate, phosphate dikinase regulatory protein (277 aa).

151 to 158 is a binding site for ADP; the sequence is GISRTSKT.

The protein belongs to the pyruvate, phosphate/water dikinase regulatory protein family. PDRP subfamily.

The catalysed reaction is N(tele)-phospho-L-histidyl/L-threonyl-[pyruvate, phosphate dikinase] + ADP = N(tele)-phospho-L-histidyl/O-phospho-L-threonyl-[pyruvate, phosphate dikinase] + AMP + H(+). It catalyses the reaction N(tele)-phospho-L-histidyl/O-phospho-L-threonyl-[pyruvate, phosphate dikinase] + phosphate + H(+) = N(tele)-phospho-L-histidyl/L-threonyl-[pyruvate, phosphate dikinase] + diphosphate. Functionally, bifunctional serine/threonine kinase and phosphorylase involved in the regulation of the pyruvate, phosphate dikinase (PPDK) by catalyzing its phosphorylation/dephosphorylation. This chain is Putative pyruvate, phosphate dikinase regulatory protein, found in Alkaliphilus oremlandii (strain OhILAs) (Clostridium oremlandii (strain OhILAs)).